The sequence spans 343 residues: MGSPGASLGIKKALQSEQATALPASAPAVSQPTAPAPSCLPKAGQVIPTLLREAPFSSVIAPTLLCGFLFLAWVAAEVPEESSRMAGSGARSEEGRRQHAFVPEPFDGANVVPNLWLHSFEVINDLNHWDHITKLRFLKESLRGEALGVYNRLSPQDQGDYGTVKEALLKAFGVPGAAPSHLPKEIVFANSMGKGYYLKGKIGKVPVRFLVDSGAQVSVVHPNLWEEVTDGDLDTLQPFENVVKVANGAEMKILGVWDTAVSLGKLKLKAQFLVANASAEEAIIGTDVLQDHNAILDFEHRTCTLKGKKFRLLPVGGSLEDEFDLELIEEDPSSEEGRQELSH.

The Cytoplasmic portion of the chain corresponds to 1–55; sequence MGSPGASLGIKKALQSEQATALPASAPAVSQPTAPAPSCLPKAGQVIPTLLREAP. Residues 1-190 constitute a propeptide that is removed on maturation; the sequence is MGSPGASLGI…HLPKEIVFAN (190 aa). Residues 56–76 form a helical membrane-spanning segment; it reads FSSVIAPTLLCGFLFLAWVAA. At 77–343 the chain is on the extracellular side; that stretch reads EVPEESSRMA…SEEGRQELSH (267 aa). The Peptidase A2 domain maps to 207 to 288; sequence VRFLVDSGAQ…AEEAIIGTDV (82 aa). Residue Asp-212 is part of the active site. Residue Asn-276 is glycosylated (N-linked (GlcNAc...) asparagine). The propeptide occupies 327 to 343; that stretch reads LIEEDPSSEEGRQELSH.

In terms of assembly, homodimer. In terms of processing, undergoes autocleavage which is necessary for activation of the protein. In terms of tissue distribution, expressed primarily in the granular layer of the epidermis and inner root sheath of hair follicles. In psoriatic skin, expressed throughout the stratum corneum. In ulcerated skin, expressed in the stratum granulosum of intact epidermis but almost absent from ulcerated regions. Expressed in differentiated areas of squamous cell carcinomas but not in undifferentiated tumors.

It is found in the membrane. Protease responsible for filaggrin processing, essential for the maintenance of a proper epidermis organization. The polypeptide is Retroviral-like aspartic protease 1 (Homo sapiens (Human)).